A 169-amino-acid polypeptide reads, in one-letter code: Regulator of ribonuclease activity A (169 aa).

It belongs to the RraA family. As to quaternary structure, homotrimer. Binds to both RNA-binding sites in the C-terminal region of Rne and to RhlB.

The protein localises to the cytoplasm. In terms of biological role, globally modulates RNA abundance by binding to RNase E (Rne) and regulating its endonucleolytic activity. Can modulate Rne action in a substrate-dependent manner by altering the composition of the degradosome. Modulates RNA-binding and helicase activities of the degradosome. In Photorhabdus laumondii subsp. laumondii (strain DSM 15139 / CIP 105565 / TT01) (Photorhabdus luminescens subsp. laumondii), this protein is Regulator of ribonuclease activity A.